Consider the following 231-residue polypeptide: Large ribosomal subunit protein uL1 (231 aa).

This sequence belongs to the universal ribosomal protein uL1 family. In terms of assembly, part of the 50S ribosomal subunit.

Functionally, binds directly to 23S rRNA. The L1 stalk is quite mobile in the ribosome, and is involved in E site tRNA release. Protein L1 is also a translational repressor protein, it controls the translation of the L11 operon by binding to its mRNA. The polypeptide is Large ribosomal subunit protein uL1 (Dechloromonas aromatica (strain RCB)).